The sequence spans 483 residues: Regulatory protein ViaA (483 aa).

Belongs to the ViaA family. Homodimer. Interacts with RavA.

The protein localises to the cytoplasm. Functionally, component of the RavA-ViaA chaperone complex, which may act on the membrane to optimize the function of some of the respiratory chains. ViaA stimulates the ATPase activity of RavA. In Salmonella agona (strain SL483), this protein is Regulatory protein ViaA.